The primary structure comprises 202 residues: Protease (202 aa).

Residues H55, D72, and C122 contribute to the active site.

It belongs to the peptidase C5 family. As to quaternary structure, interacts with protease cofactor pVI-C; this interaction is necessary for protease activation.

The protein localises to the virion. It localises to the host nucleus. It carries out the reaction Cleaves proteins of the adenovirus and its host cell at two consensus sites: -Yaa-Xaa-Gly-Gly-|-Xaa- and -Yaa-Xaa-Gly-Xaa-|-Gly- (in which Yaa is Met, Ile or Leu, and Xaa is any amino acid).. Requires DNA and protease cofactor for maximal activation. Inside nascent virions, becomes partially activated by binding to the viral DNA, allowing it to cleave the cofactor that binds to the protease and fully activates it. Actin, like the viral protease cofactor, seems to act as a cofactor in the cleavage of cytokeratin 18 and of actin itself. Cleaves viral precursor proteins (pTP, pIIIa, pVI, pVII, pVIII, and pX) inside newly assembled particles giving rise to mature virions. Protease complexed to its cofactor slides along the viral DNA to specifically locate and cleave the viral precursors. Mature virions have a weakened organization compared to the unmature virions, thereby facilitating subsequent uncoating. Without maturation, the particle lacks infectivity and is unable to uncoat. Late in adenovirus infection, in the cytoplasm, may participate in the cytoskeleton destruction. Cleaves host cell cytoskeletal keratins K7 and K18. The chain is Protease from Bovine adenovirus 7 (BAdV-7).